The primary structure comprises 138 residues: MPRILSIDYGQKRTGIAVTDEMQIIASGLTTIPTHTLIDFLKDYFAKEKVEAVLIGEPKQMNGQPSESASVINGFVTHFSNIFPDMKVIRVDERFTSKMAFQTMLDSGLSKKQRQNKGLIDEISATIMLQDYLSSKRF.

It belongs to the YqgF nuclease family.

It is found in the cytoplasm. In terms of biological role, could be a nuclease involved in processing of the 5'-end of pre-16S rRNA. The sequence is that of Putative pre-16S rRNA nuclease from Flavobacterium johnsoniae (strain ATCC 17061 / DSM 2064 / JCM 8514 / BCRC 14874 / CCUG 350202 / NBRC 14942 / NCIMB 11054 / UW101) (Cytophaga johnsonae).